We begin with the raw amino-acid sequence, 1161 residues long: DNA-directed RNA polymerase III subunit 2 (1161 aa).

The C4-type zinc finger occupies 1104–1125 (CRACGLLGYYNYKLKKAVCTTC).

It belongs to the RNA polymerase beta chain family. Component of the RNA polymerase III (Pol III) complex consisting of 17 subunits.

The protein localises to the nucleus. It catalyses the reaction RNA(n) + a ribonucleoside 5'-triphosphate = RNA(n+1) + diphosphate. Functionally, DNA-dependent RNA polymerase catalyzes the transcription of DNA into RNA using the four ribonucleoside triphosphates as substrates. Second largest core component of RNA polymerase III which synthesizes small RNAs, such as 5S rRNA and tRNAs. Proposed to contribute to the polymerase catalytic activity and forms the polymerase active center together with the largest subunit. Pol III is composed of mobile elements and NRPC2 is part of the core element with the central large cleft and probably a clamp element that moves to open and close the cleft. Essential for the completion of the three rounds of mitosis in female megaspores required for the development of mature gametophytes. The polypeptide is DNA-directed RNA polymerase III subunit 2 (Arabidopsis thaliana (Mouse-ear cress)).